Here is a 902-residue protein sequence, read N- to C-terminus: AP-4 complex accessory subunit RUSC1 (902 aa).

4 disordered regions span residues glutamate 31–proline 67, leucine 81–cysteine 155, glutamine 189–proline 227, and lysine 247–glycine 450. A compositionally biased stretch (low complexity) spans alanine 94–leucine 112. Residues threonine 249 to asparagine 261 are compositionally biased toward low complexity. Over residues tryptophan 277–lysine 289 the composition is skewed to polar residues. Residues aspartate 291 to proline 309 are compositionally biased toward basic and acidic residues. Composition is skewed to pro residues over residues proline 381–proline 390 and proline 398–proline 407. The span at proline 433–glycine 450 shows a compositional bias: low complexity. The interaction with TRAF6 stretch occupies residues methionine 470 to asparagine 605. The RUN domain occupies aspartate 522–glutamate 666. Residues threonine 606–proline 672 form an interaction with IKBKG region. Disordered stretches follow at residues leucine 706–tryptophan 729 and glycine 747–methionine 776. In terms of domain architecture, SH3 spans glutamine 844–leucine 902.

Associated component of the adapter-like complex 4 (AP-4). Interacts with IKBKG and TRAF6. Interacts with F-actin, acetylated actin, TUBB3, STX1A, KIF5B and KLC1. Phosphorylated on serine residues following nuclear translocation. In terms of processing, polyubiquitinated; polyubiquitination involves TRAF6. As to expression, predominantly expressed in brain.

It is found in the cytoplasm. It localises to the nucleus. The protein localises to the cytoskeleton. The protein resides in the cytoplasmic vesicle. Its subcellular location is the early endosome. It is found in the postsynaptic density. It localises to the golgi apparatus. Functionally, associates with the adapter-like complex 4 (AP-4) and may therefore play a role in vesicular trafficking of proteins at the trans-Golgi network. Signaling adapter which plays a role in neuronal differentiation. Involved in regulation of NGF-dependent neurite outgrowth. May play a role in neuronal vesicular trafficking, specifically involving pre-synaptic membrane proteins. Seems to be involved in signaling pathways that are regulated by the prolonged activation of MAPK. Can regulate the polyubiquitination of IKBKG and thus may be involved in regulation of the NF-kappa-B pathway. This Homo sapiens (Human) protein is AP-4 complex accessory subunit RUSC1.